Consider the following 1626-residue polypeptide: MAGLRGNAVAGLLWMLLLWSGGGGCQAQRAGCKSVHYDLVFLLDTSSSVGKEDFEKVRQWVANLVDTFEVGPDRTRVGVVRYSDRPTTAFELGLFGSQEEVKAAARRLAYHGGNTNTGDALRYITARSFSPHAGGRPRDRAYKQVAILLTDGRSQDLVLDAAAAAHRAGIRIFAVGVGEALKEELEEIASEPKSAHVFHVSDFNAIDKIRGKLRRRLCENVLCPSVRVEGDRFKHTNGGTKEITGFDLMDLFSVKEILGKRENGAQSSYVRMGSFPVVQSTEDVFPQGLPDEYAFVTTFRFRKTSRKEDWYIWQVIDQYSIPQVSIRLDGENKAVEYNAVGAMKDAVRVVFRGSRVNDLFDRDWHKMALSIQAQNVSLHIDCALVQTLPIEERENIDIQGKTVIGKRLYDSVPIDFDLQRIVIYCDSRHAELETCCDIPSGPCQVTVVTEPPPPPPPQRPPTPGSEQIGFLKTINCSCPAGEKGEMGVAGPMGLPGPKGDIGAIGPVGAPGPKGEKGDVGIGPFGQGEKGEKGSLGLPGPPGRDGSKGMRGEPGELGEPGLPGEVGMRGPQGPPGLPGPPGRVGAPGLQGERGEKGTRGEKGERGLDGFPGKPGDTGQQGRPGPSGVAGPQGEKGDVGPAGPPGVPGSVVQQEGLKGEQGAPGPRGHQGAPGPPGARGPIGPEGRDGPPGLQGLRGKKGDMGPPGIPGLLGLQGPPGPPGVPGPPGPGGSPGLPGEIGFPGKPGPPGPTGPPGKDGPNGPPGPPGTKGEPGERGEDGLPGKPGLRGEIGEQGLAGRPGEKGEAGLPGAPGFPGVRGEKGDQGEKGELGLPGLKGDRGEKGEAGPAGPPGLPGTTSLFTPHPRMPGEQGPKGEKGDPGLPGEPGLQGRPGELGPQGPTGPPGAKGQEGAHGAPGAAGNPGAPGHVGAPGPSGPPGSVGAPGLRGTPGKDGERGEKGAAGEEGSPGPVGPRGDPGAPGLPGPPGKGKDGEPGLRGSPGLPGPLGTKAACGKVRGSENCALGGQCVKGDRGAPGIPGSPGSRGDPGIGVAGPPGPSGPPGDKGSPGSRGLPGFPGPQGPAGRDGAPGNPGERGPPGKPGLSSLLSPGDINLLAKDVCNDCPPGPPGLPGLPGFKGDKGVPGKPGREGTEGKKGEAGPPGLPGPPGIAGPQGSQGERGADGEVGQKGDQGHPGVPGFMGPPGNPGPPGADGIAGAAGPPGIQGSPGKEGPPGPQGPSGLPGIPGEEGKEGRDGKPGPPGEPGKAGEPGLPGPEGARGPPGFKGHTGDSGAPGPRGESGAMGLPGQEGLPGKDGDTGPTGPQGPQGPRGPPGKNGSPGSPGEPGPSGTPGQKGSKGENGSPGLPGFLGPRGPPGEPGEKGVPGKEGVPGKPGEPGFKGERGDPGIKGDKGPPGGKGQPGDPGIPGHKGHTGLMGPQGLPGENGPVGPPGPPGQPGFPGLRGESPSMETLRRLIQEELGKQLETRLAYLLAQMPPAYMKSSQGRPGPPGPPGKDGLPGRAGPMGEPGRPGQGGLEGPSGPIGPKGERGAKGDPGAPGVGLRGEMGPPGIPGQPGEPGYAKDGLPGIPGPQGETGPAGHPGLPGPPGPPGQCDPSQCAYFASLAARPGNVKGP.

The N-terminal stretch at 1–27 is a signal peptide; the sequence is MAGLRGNAVAGLLWMLLLWSGGGGCQA. Residues 38–213 enclose the VWFA domain; that stretch reads DLVFLLDTSS…NAIDKIRGKL (176 aa). The region spanning 239 to 427 is the Laminin G-like domain; the sequence is GTKEITGFDL…LQRIVIYCDS (189 aa). N-linked (GlcNAc...) asparagine glycosylation is present at N375. 16 Collagen-like domains span residues 481–520, 526–565, 566–625, 657–708, 714–773, 774–833, 868–922, 925–984, 1047–1095, 1118–1155, 1156–1215, 1249–1308, 1315–1374, 1387–1446, 1495–1550, and 1575–1604; these read GEKG…GDVG, QGEK…PGEV, GMRG…PGPS, GEQG…GIPG, GPPG…PGER, GEDG…PGLK, GPKG…GAPG, GAPG…PGKG, AGPP…PGKP, PPGP…AGPP, GLPG…AGPP, GKPG…PGKD, GPQG…PGEK, GEPG…PGPP, SQGR…PGAP, and DGLP…PPGQ. Disordered stretches follow at residues 506–1002, 1019–1103, 1119–1458, and 1491–1609; these read PVGA…GPLG, GGQC…LLSP, PGPP…RGES, and YMKS…DPSQ. Over residues 544–553 the composition is skewed to basic and acidic residues; sequence DGSKGMRGEP. The segment covering 571–580 has biased composition (pro residues); the sequence is QGPPGLPGPP. Over residues 591–606 the composition is skewed to basic and acidic residues; sequence ERGEKGTRGEKGERGL. The segment covering 661–670 has biased composition (low complexity); it reads APGPRGHQGA. 2 stretches are compositionally biased toward pro residues: residues 715 to 728 and 742 to 751; these read PPGP…PGPG and KPGPPGPTGP. 2 stretches are compositionally biased toward basic and acidic residues: residues 769-778 and 815-826; these read EPGERGEDGL and RGEKGDQGEKGE. Residues 908 to 939 are compositionally biased toward low complexity; that stretch reads AHGAPGAAGNPGAPGHVGAPGPSGPPGSVGAP. Residues 945–957 are compositionally biased toward basic and acidic residues; that stretch reads PGKDGERGEKGAA. Composition is skewed to low complexity over residues 959–974 and 1056–1065; these read EEGS…DPGA and PGDKGSPGSR. Composition is skewed to basic and acidic residues over residues 1131–1151 and 1173–1185; these read KGDK…KKGE and RGAD…KGDQ. A compositionally biased stretch (low complexity) spans 1205-1223; that stretch reads ADGIAGAAGPPGIQGSPGK. A compositionally biased stretch (basic and acidic residues) spans 1241–1250; the sequence is EEGKEGRDGK. The segment covering 1260 to 1275 has biased composition (low complexity); sequence AGEPGLPGPEGARGPP. Low complexity predominate over residues 1379–1389; it reads KEGVPGKPGEP. A compositionally biased stretch (basic and acidic residues) spans 1391-1404; it reads FKGERGDPGIKGDK. The span at 1405–1414 shows a compositional bias: gly residues; it reads GPPGGKGQPG. A compositionally biased stretch (pro residues) spans 1440-1449; that stretch reads VGPPGPPGQP. A compositionally biased stretch (gly residues) spans 1521-1530; the sequence is GRPGQGGLEG. Residues 1595 to 1604 show a composition bias toward pro residues; the sequence is LPGPPGPPGQ.

Belongs to the fibril-associated collagens with interrupted helices (FACIT) family. In terms of tissue distribution, restrictive expression is observed at tissue junctions such as the myotendinous junction in skeletal and heart muscle, the articular cartilage-synovial fluid junction, or the border between the anagen hair follicle and the dermis in the skin. It is deposited in the basement membrane zone of the myotendinous junction and the hair follicle and associated with the extrafibrillar matrix in cartilage.

The protein resides in the secreted. It localises to the extracellular space. It is found in the extracellular matrix. Its subcellular location is the cytoplasm. Its function is as follows. Acts as a cell adhesion ligand for skin epithelial cells and fibroblasts. The sequence is that of Collagen alpha-1(XXII) chain (COL22A1) from Homo sapiens (Human).